The chain runs to 35 residues: DDLFNINAGIVKLFGVTTLDVVRTQDGGTEVVEAK.

Residue Asn-7 coordinates NAD(+). Arg-23 is a substrate binding site.

This sequence belongs to the LDH/MDH superfamily. MDH type 1 family. As to quaternary structure, homodimer.

It is found in the mitochondrion matrix. It carries out the reaction (S)-malate + NAD(+) = oxaloacetate + NADH + H(+). The protein is Malate dehydrogenase, mitochondrial of Capsicum annuum var. annuum (Red pepper).